Here is a 652-residue protein sequence, read N- to C-terminus: Phosphomethylpyrimidine synthase (652 aa).

Substrate-binding positions include N235, M264, Y293, H329, 349-351 (SRG), 390-393 (DGMR), and E429. H433 contacts Zn(2+). Y456 contacts substrate. H497 provides a ligand contact to Zn(2+). [4Fe-4S] cluster contacts are provided by C577, C580, and C585.

The protein belongs to the ThiC family. Homodimer. [4Fe-4S] cluster is required as a cofactor.

The catalysed reaction is 5-amino-1-(5-phospho-beta-D-ribosyl)imidazole + S-adenosyl-L-methionine = 4-amino-2-methyl-5-(phosphooxymethyl)pyrimidine + CO + 5'-deoxyadenosine + formate + L-methionine + 3 H(+). Its pathway is cofactor biosynthesis; thiamine diphosphate biosynthesis. Its function is as follows. Catalyzes the synthesis of the hydroxymethylpyrimidine phosphate (HMP-P) moiety of thiamine from aminoimidazole ribotide (AIR) in a radical S-adenosyl-L-methionine (SAM)-dependent reaction. In Shewanella sediminis (strain HAW-EB3), this protein is Phosphomethylpyrimidine synthase.